The sequence spans 806 residues: Glycerol-3-phosphate acyltransferase (806 aa).

The HXXXXD motif signature appears at 305 to 310; sequence CHRSHM.

The protein belongs to the GPAT/DAPAT family.

It is found in the cell inner membrane. The catalysed reaction is sn-glycerol 3-phosphate + an acyl-CoA = a 1-acyl-sn-glycero-3-phosphate + CoA. The protein operates within phospholipid metabolism; CDP-diacylglycerol biosynthesis; CDP-diacylglycerol from sn-glycerol 3-phosphate: step 1/3. The sequence is that of Glycerol-3-phosphate acyltransferase from Salmonella paratyphi A (strain ATCC 9150 / SARB42).